Consider the following 401-residue polypeptide: Exodeoxyribonuclease 7 large subunit (401 aa).

The protein belongs to the XseA family. As to quaternary structure, heterooligomer composed of large and small subunits.

The protein localises to the cytoplasm. The catalysed reaction is Exonucleolytic cleavage in either 5'- to 3'- or 3'- to 5'-direction to yield nucleoside 5'-phosphates.. Bidirectionally degrades single-stranded DNA into large acid-insoluble oligonucleotides, which are then degraded further into small acid-soluble oligonucleotides. In Clostridium botulinum (strain Loch Maree / Type A3), this protein is Exodeoxyribonuclease 7 large subunit.